The chain runs to 458 residues: Bifunctional protein GlmU (458 aa).

A pyrophosphorylase region spans residues 1-230 (MLQIDVVILA…DWEVVGVNDK (230 aa)). Residues 9-12 (LAAG), Lys23, Gln75, and 80-81 (GT) contribute to the UDP-N-acetyl-alpha-D-glucosamine site. Asp104 serves as a coordination point for Mg(2+). UDP-N-acetyl-alpha-D-glucosamine contacts are provided by Gly139, Glu155, Asn170, and Asn228. Residue Asn228 participates in Mg(2+) binding. The tract at residues 231–251 (IQLSTLERAHQQDVAKGLMEQ) is linker. Positions 252-458 (GVMFADPARF…NWKRPKKNKD (207 aa)) are N-acetyltransferase. 2 residues coordinate UDP-N-acetyl-alpha-D-glucosamine: Arg334 and Lys352. His364 functions as the Proton acceptor in the catalytic mechanism. 2 residues coordinate UDP-N-acetyl-alpha-D-glucosamine: Tyr367 and Asn378. Acetyl-CoA contacts are provided by residues Ala381, 387 to 388 (NY), Ser406, Ala424, and Arg441.

It in the N-terminal section; belongs to the N-acetylglucosamine-1-phosphate uridyltransferase family. The protein in the C-terminal section; belongs to the transferase hexapeptide repeat family. Homotrimer. It depends on Mg(2+) as a cofactor.

It localises to the cytoplasm. The catalysed reaction is alpha-D-glucosamine 1-phosphate + acetyl-CoA = N-acetyl-alpha-D-glucosamine 1-phosphate + CoA + H(+). It catalyses the reaction N-acetyl-alpha-D-glucosamine 1-phosphate + UTP + H(+) = UDP-N-acetyl-alpha-D-glucosamine + diphosphate. It functions in the pathway nucleotide-sugar biosynthesis; UDP-N-acetyl-alpha-D-glucosamine biosynthesis; N-acetyl-alpha-D-glucosamine 1-phosphate from alpha-D-glucosamine 6-phosphate (route II): step 2/2. Its pathway is nucleotide-sugar biosynthesis; UDP-N-acetyl-alpha-D-glucosamine biosynthesis; UDP-N-acetyl-alpha-D-glucosamine from N-acetyl-alpha-D-glucosamine 1-phosphate: step 1/1. It participates in bacterial outer membrane biogenesis; LPS lipid A biosynthesis. Functionally, catalyzes the last two sequential reactions in the de novo biosynthetic pathway for UDP-N-acetylglucosamine (UDP-GlcNAc). The C-terminal domain catalyzes the transfer of acetyl group from acetyl coenzyme A to glucosamine-1-phosphate (GlcN-1-P) to produce N-acetylglucosamine-1-phosphate (GlcNAc-1-P), which is converted into UDP-GlcNAc by the transfer of uridine 5-monophosphate (from uridine 5-triphosphate), a reaction catalyzed by the N-terminal domain. In Nitrosomonas eutropha (strain DSM 101675 / C91 / Nm57), this protein is Bifunctional protein GlmU.